A 465-amino-acid polypeptide reads, in one-letter code: Cysteine--tRNA ligase (465 aa).

Cys27 is a Zn(2+) binding site. A 'HIGH' region motif is present at residues Pro29–Asn39. Cys207, His232, and Glu236 together coordinate Zn(2+). The short motif at Lys264 to Ser268 is the 'KMSKS' region element. An ATP-binding site is contributed by Lys267.

Belongs to the class-I aminoacyl-tRNA synthetase family. Monomer. Zn(2+) is required as a cofactor.

The protein localises to the cytoplasm. The enzyme catalyses tRNA(Cys) + L-cysteine + ATP = L-cysteinyl-tRNA(Cys) + AMP + diphosphate. In Clostridioides difficile (strain 630) (Peptoclostridium difficile), this protein is Cysteine--tRNA ligase.